Here is a 212-residue protein sequence, read N- to C-terminus: Anaphase-promoting complex subunit 10 (212 aa).

One can recognise a DOC domain in the interval 12–196 (MDEEERTSSR…PSAVLEARPG (185 aa)).

This sequence belongs to the APC10 family. The APC/C complex is probably composed of at least 12 subunits: apc-2, apc-10, apc-11, cdc-26, emb-1, emb-27, emb-30, mat-1, mat-2, mat-3, such-1 and gfi-3.

It participates in protein modification; protein ubiquitination. Its function is as follows. Probable component of the anaphase promoting complex/cyclosome (APC/C), a cell cycle-regulated E3 ubiquitin ligase that controls progression through mitosis and the G1 phase of the cell cycle. The APC/C complex acts by mediating ubiquitination and subsequent degradation of target proteins. This is Anaphase-promoting complex subunit 10 from Caenorhabditis elegans.